Here is a 296-residue protein sequence, read N- to C-terminus: Fructose-bisphosphate aldolase class 1 (296 aa).

Glutamate 175 (proton acceptor) is an active-site residue. Lysine 212 acts as the Schiff-base intermediate with dihydroxyacetone-P in catalysis.

This sequence belongs to the class I fructose-bisphosphate aldolase family.

It catalyses the reaction beta-D-fructose 1,6-bisphosphate = D-glyceraldehyde 3-phosphate + dihydroxyacetone phosphate. The protein operates within carbohydrate degradation; glycolysis; D-glyceraldehyde 3-phosphate and glycerone phosphate from D-glucose: step 4/4. This Staphylococcus epidermidis (strain ATCC 35984 / DSM 28319 / BCRC 17069 / CCUG 31568 / BM 3577 / RP62A) protein is Fructose-bisphosphate aldolase class 1.